A 456-amino-acid chain; its full sequence is Serine/threonine-protein kinase PBS1 (456 aa).

Residues 1–57 are disordered; sequence MGCFSCFDSSDDEKLNPVDESNHGQKKQSQPTVSNNISGLPSGGEKLSSKTNGGSKR. Gly-2 carries the N-myristoyl glycine lipid modification. 2 S-palmitoyl cysteine lipidation sites follow: Cys-3 and Cys-6. A compositionally biased stretch (basic and acidic residues) spans 12-23; the sequence is DEKLNPVDESNH. Phosphoserine is present on Ser-21. Residues 27–39 are compositionally biased toward polar residues; it reads KQSQPTVSNNISG. The Protein kinase domain occupies 86-363; that stretch reads FHPDTFLGEG…ADVVTALSYL (278 aa). ATP contacts are provided by residues 92–100 and Lys-115; that span reads LGEGGFGRV. Tyr-160 carries the post-translational modification Phosphotyrosine. Asp-213 acts as the Proton acceptor in catalysis. Residues Ser-217 and Ser-247 each carry the phosphoserine modification. Thr-248 and Thr-253 each carry phosphothreonine. Tyr-261 carries the post-translational modification Phosphotyrosine. The Recognition motif required for RPS5-mediated plant resistance to P.syringae motif lies at 292–296; the sequence is SEMPH. The tract at residues 368–456 is disordered; that stretch reads YDPSKDDSRR…QGTSESNSTG (89 aa). Composition is skewed to basic and acidic residues over residues 370-392 and 400-429; these read PSKDDSRRNRDERGARLITRNDD and FDLEGSEKEDSPRETARILNRDINRERAVA. Residues 446–456 show a composition bias toward polar residues; it reads EQGTSESNSTG.

The protein belongs to the protein kinase superfamily. Ser/Thr protein kinase family. In infected plant cells, it interacts with the P.syringae virulence protein avrPphB. In uninfected plants, autophosphorylated form interacts with RPS5. Interacts with FLS2. Cleaved by avrPphB in infected plant cells. Its cleavage serves as a signal that triggers the RPS5-mediated defense system. Post-translationally, autophosphorylates. Autophosphorylation may be required to trigger the RPS5-mediated plant defense system. In terms of processing, palmitoylation at Cys-3 and Cys-6 are required for plasma membrane location that is essential for the RPS5-mediated plant defense response.

The protein localises to the cell membrane. The catalysed reaction is L-seryl-[protein] + ATP = O-phospho-L-seryl-[protein] + ADP + H(+). The enzyme catalyses L-threonyl-[protein] + ATP = O-phospho-L-threonyl-[protein] + ADP + H(+). Protein kinase required for plant defense mechanism mediated by the disease resistance (R) protein RPS5. In case of infection by Pseudomonas syringae, AvrPphB triggers RPS5-mediated defense mechanism via the cleavage of PBS1. Both kinase activity and cleavage by avrPphB are independently required to trigger the RPS5-mediated resistance. Contributes to PAMP-triggered immunity (PTI) signaling and defense responses downstream of FLS2. The polypeptide is Serine/threonine-protein kinase PBS1 (Arabidopsis thaliana (Mouse-ear cress)).